A 223-amino-acid polypeptide reads, in one-letter code: Sigma non-opioid intracellular receptor 1 (223 aa).

Residues 1-9 (MPWAVGRRW) are Lumenal-facing. Residues 2-8 (PWAVGRR) are targeting to endoplasmic reticulum-associated lipid droplets. Residues 10 to 30 (AWITLFLTIVAVLIQAVWLWL) traverse the membrane as a helical segment. At 31-223 (GTQSFVFQRE…LTTYLFGQDP (193 aa)) the chain is on the cytoplasmic side. The tract at residues 99–106 (SLSEYVLL) is important for ligand-binding. A C-terminal hydrophobic region region spans residues 177 to 223 (VIPSTLAFALSDTIFSTQDFLTLFYTLRAYARGLRLELTTYLFGQDP).

The protein belongs to the ERG2 family. In terms of assembly, homotrimer. Interacts with KCNA2; cocaine consumption leads to increased interaction. Forms a ternary complex with ANK2 and ITPR3. The complex is disrupted by agonists. Interacts with KCNA4. Interacts with RNF112 in an oxidative stress-regulated manner. Expressed in ependymocytes and neurons throughout the CNS from the olfactory bulb to the spinal cord. Expressed by progenitor, mature and satellite oligodendrocytes and by Schwann cells (at protein level). Expressed in liver, intestine, kidney, brain, lung and heart. Expressed by retinal cells.

The protein resides in the nucleus inner membrane. Its subcellular location is the nucleus outer membrane. The protein localises to the nucleus envelope. It localises to the cytoplasmic vesicle. It is found in the endoplasmic reticulum membrane. The protein resides in the membrane. Its subcellular location is the lipid droplet. The protein localises to the cell junction. It localises to the cell membrane. It is found in the cell projection. The protein resides in the growth cone. Its subcellular location is the postsynaptic density membrane. Its function is as follows. Functions in lipid transport from the endoplasmic reticulum and is involved in a wide array of cellular functions probably through regulation of the biogenesis of lipid microdomains at the plasma membrane. Involved in the regulation of different receptors it plays a role in BDNF signaling and EGF signaling. Also regulates ion channels like the potassium channel and could modulate neurotransmitter release. Plays a role in calcium signaling through modulation together with ANK2 of the ITP3R-dependent calcium efflux at the endoplasmic reticulum. Plays a role in several other cell functions including proliferation, survival and death. Originally identified for its ability to bind various psychoactive drugs it is involved in learning processes, memory and mood alteration. Necessary for proper mitochondrial axonal transport in motor neurons, in particular the retrograde movement of mitochondria. Plays a role in protecting cells against oxidative stress-induced cell death via its interaction with RNF112. The polypeptide is Sigma non-opioid intracellular receptor 1 (Sigmar1) (Rattus norvegicus (Rat)).